Consider the following 187-residue polypeptide: UPF0200 protein APE_1753.1 (187 aa).

An ATP-binding site is contributed by 13–20; that stretch reads GLPGSGKS.

Belongs to the UPF0200 family.

The protein is UPF0200 protein APE_1753.1 of Aeropyrum pernix (strain ATCC 700893 / DSM 11879 / JCM 9820 / NBRC 100138 / K1).